The primary structure comprises 335 residues: Biotin synthase (335 aa).

The Radical SAM core domain maps to 43-269 (YFGKKVKLNM…INPTKEIRIA (227 aa)). 3 residues coordinate [4Fe-4S] cluster: cysteine 61, cysteine 65, and cysteine 68. Residues cysteine 104, cysteine 137, cysteine 197, and arginine 267 each contribute to the [2Fe-2S] cluster site.

Belongs to the radical SAM superfamily. Biotin synthase family. Homodimer. [4Fe-4S] cluster is required as a cofactor. The cofactor is [2Fe-2S] cluster.

The enzyme catalyses (4R,5S)-dethiobiotin + (sulfur carrier)-SH + 2 reduced [2Fe-2S]-[ferredoxin] + 2 S-adenosyl-L-methionine = (sulfur carrier)-H + biotin + 2 5'-deoxyadenosine + 2 L-methionine + 2 oxidized [2Fe-2S]-[ferredoxin]. It functions in the pathway cofactor biosynthesis; biotin biosynthesis; biotin from 7,8-diaminononanoate: step 2/2. Functionally, catalyzes the conversion of dethiobiotin (DTB) to biotin by the insertion of a sulfur atom into dethiobiotin via a radical-based mechanism. The sequence is that of Biotin synthase from Staphylococcus aureus (strain MRSA252).